A 114-amino-acid polypeptide reads, in one-letter code: MSNETVLPLQFTEAAAKKVKLLISDEENPNLKLRVYITGGGCSGFQYGFTFDDQVNDGDMTIEKQGVELVVDPMSLQYLVGGAVDYTEGLEGSRFIVTNPNAKSTCGCGSSFSI.

3 residues coordinate iron-sulfur cluster: C42, C106, and C108.

Belongs to the HesB/IscA family. Homodimer. The cofactor is iron-sulfur cluster.

In terms of biological role, required for insertion of 4Fe-4S clusters for at least IspG. This Yersinia pseudotuberculosis serotype O:1b (strain IP 31758) protein is Iron-sulfur cluster insertion protein ErpA.